The chain runs to 619 residues: DNA polymerase II small subunit (619 aa).

Residues 78–122 (EEAEKTVESQETRASELEEGGVSQVSSGELQELKEESPEISTTEE) form a disordered region. Positions 79 to 93 (EAEKTVESQETRASE) are enriched in basic and acidic residues.

Belongs to the DNA polymerase delta/II small subunit family. In terms of assembly, heterodimer of a large subunit and a small subunit.

It carries out the reaction DNA(n) + a 2'-deoxyribonucleoside 5'-triphosphate = DNA(n+1) + diphosphate. The catalysed reaction is Exonucleolytic cleavage in the 3'- to 5'-direction to yield nucleoside 5'-phosphates.. Possesses two activities: a DNA synthesis (polymerase) and an exonucleolytic activity that degrades single-stranded DNA in the 3' to 5' direction. Has a template-primer preference which is characteristic of a replicative DNA polymerase. The polypeptide is DNA polymerase II small subunit (polB) (Pyrococcus abyssi (strain GE5 / Orsay)).